Here is a 181-residue protein sequence, read N- to C-terminus: ATP synthase subunit delta (181 aa).

It belongs to the ATPase delta chain family. In terms of assembly, F-type ATPases have 2 components, F(1) - the catalytic core - and F(0) - the membrane proton channel. F(1) has five subunits: alpha(3), beta(3), gamma(1), delta(1), epsilon(1). F(0) has three main subunits: a(1), b(2) and c(10-14). The alpha and beta chains form an alternating ring which encloses part of the gamma chain. F(1) is attached to F(0) by a central stalk formed by the gamma and epsilon chains, while a peripheral stalk is formed by the delta and b chains.

The protein localises to the cell membrane. In terms of biological role, f(1)F(0) ATP synthase produces ATP from ADP in the presence of a proton or sodium gradient. F-type ATPases consist of two structural domains, F(1) containing the extramembraneous catalytic core and F(0) containing the membrane proton channel, linked together by a central stalk and a peripheral stalk. During catalysis, ATP synthesis in the catalytic domain of F(1) is coupled via a rotary mechanism of the central stalk subunits to proton translocation. This protein is part of the stalk that links CF(0) to CF(1). It either transmits conformational changes from CF(0) to CF(1) or is implicated in proton conduction. In Oceanobacillus iheyensis (strain DSM 14371 / CIP 107618 / JCM 11309 / KCTC 3954 / HTE831), this protein is ATP synthase subunit delta.